The primary structure comprises 505 residues: Dolichyl pyrophosphate Glc1Man9GlcNAc2 alpha-1,3-glucosyltransferase (505 aa).

At 1 to 3 (MAE) the chain is on the lumenal side. A helical transmembrane segment spans residues 4–24 (IYPSLVQCAIVATAFKVLLFP). Topologically, residues 25-101 (AYKSTDFEVH…DSWQTVYFQR (77 aa)) are cytoplasmic. The helical transmembrane segment at 102-122 (WTVIVTELVLLYALQMFVDST) threads the bilayer. Residues 123–128 (PGVSKR) are Lumenal-facing. The helical transmembrane segment at 129-149 (AAHAAAVSILLSPGLLIIDHI) threads the bilayer. Residues 150–152 (HFQ) lie on the Cytoplasmic side of the membrane. The helical transmembrane segment at 153–169 (YNGVMYGILIASLVLAK) threads the bilayer. At 170-173 (KKSS) the chain is on the lumenal side. A helical membrane pass occupies residues 174-194 (LLASGLVFAALLCMKHIYLYL). Residues 195–224 (APAYFVYLLRVYCLPPKLSPRSIFRIQFFN) lie on the Cytoplasmic side of the membrane. The chain crosses the membrane as a helical span at residues 225 to 245 (CVKLGGGIAAIFAAAFGPFAL). The Lumenal segment spans residues 246-319 (KNQIPQIFSR…TSFAVLPDIT (74 aa)). Residues 320–340 (PRMCFVLTLLFQAIPLIKLFM) traverse the membrane as a helical segment. Topologically, residues 341 to 359 (RPTWEGFIGGVTLCGYASF) are cytoplasmic. Residues 360 to 380 (LFGWHVHEKAILLVIIPFSLI) form a helical membrane-spanning segment. At 381 to 386 (ALKDRR) the chain is on the lumenal side. The chain crosses the membrane as a helical span at residues 387–407 (YLGAFRPLAVAGHVSLFPLIF). Over 408–409 (TP) the chain is Cytoplasmic. Residues 410–430 (AEFPIKTVYTIFWLVLFLMAF) traverse the membrane as a helical segment. Topologically, residues 431-450 (DRLAPAPTRQRLFLFDRFST) are lumenal. A helical transmembrane segment spans residues 451-471 (AYITVSIPLIFYCSLMHGIIF). The Cytoplasmic segment spans residues 472-480 (GKSYEFLPL). The chain crosses the membrane as a helical span at residues 481 to 501 (MFTSSYSAIGVVGSWLGFMVV). At 502 to 505 (YFTE) the chain is on the lumenal side.

Belongs to the ALG6/ALG8 glucosyltransferase family.

It localises to the endoplasmic reticulum membrane. It carries out the reaction an alpha-D-Glc-(1-&gt;3)-alpha-D-Man-(1-&gt;2)-alpha-D-Man-(1-&gt;2)-alpha-D-Man-(1-&gt;3)-[alpha-D-Man-(1-&gt;2)-alpha-D-Man-(1-&gt;3)-[alpha-D-Man-(1-&gt;2)-alpha-D-Man-(1-&gt;6)]-alpha-D-Man-(1-&gt;6)]-beta-D-Man-(1-&gt;4)-beta-D-GlcNAc-(1-&gt;4)-alpha-D-GlcNAc-diphospho-di-trans,poly-cis-dolichol + a di-trans,poly-cis-dolichyl beta-D-glucosyl phosphate = an alpha-D-Glc-(1-&gt;3)-alpha-D-Glc-(1-&gt;3)-alpha-D-Man-(1-&gt;2)-alpha-D-Man-(1-&gt;2)-alpha-D-Man-(1-&gt;3)-[alpha-D-Man-(1-&gt;2)-alpha-D-Man-(1-&gt;3)-[alpha-D-Man-(1-&gt;2)-alpha-D-Man-(1-&gt;6)]-alpha-D-Man-(1-&gt;6)]-beta-D-Man-(1-&gt;4)-beta-D-GlcNAc-(1-&gt;4)-alpha-D-GlcNAc-diphospho-di-trans,poly-cis-dolichol + a di-trans,poly-cis-dolichyl phosphate + H(+). Its pathway is protein modification; protein glycosylation. Dolichyl pyrophosphate Glc1Man9GlcNAc2 alpha-1,3-glucosyltransferase that operates in the biosynthetic pathway of dolichol-linked oligosaccharides, the glycan precursors employed in protein asparagine (N)-glycosylation. The assembly of dolichol-linked oligosaccharides begins on the cytosolic side of the endoplasmic reticulum membrane and finishes in its lumen. The sequential addition of sugars to dolichol pyrophosphate produces dolichol-linked oligosaccharides containing fourteen sugars, including two GlcNAcs, nine mannoses and three glucoses. Once assembled, the oligosaccharide is transferred from the lipid to nascent proteins by oligosaccharyltransferases. In the lumen of the endoplasmic reticulum, adds the second glucose residue from dolichyl phosphate glucose (Dol-P-Glc) onto the lipid-linked oligosaccharide intermediate Glc(1)Man(9)GlcNAc(2)-PP-Dol to produce Glc(2)Man(9)GlcNAc(2)-PP-Dol. This is Dolichyl pyrophosphate Glc1Man9GlcNAc2 alpha-1,3-glucosyltransferase (alg-8) from Neurospora crassa (strain ATCC 24698 / 74-OR23-1A / CBS 708.71 / DSM 1257 / FGSC 987).